We begin with the raw amino-acid sequence, 503 residues long: Cytochrome P450 3A9 (503 aa).

Cys-442 provides a ligand contact to heme.

This sequence belongs to the cytochrome P450 family. The cofactor is heme. Mainly expressed in olfactory epithelium.

The protein resides in the endoplasmic reticulum membrane. The protein localises to the microsome membrane. It carries out the reaction an organic molecule + reduced [NADPH--hemoprotein reductase] + O2 = an alcohol + oxidized [NADPH--hemoprotein reductase] + H2O + H(+). Functionally, this isozyme seems to be implicated in olfaction. Active in the demethylation of erythromycin as well as benzphetamine. This chain is Cytochrome P450 3A9 (Cyp3a9), found in Rattus norvegicus (Rat).